The following is a 514-amino-acid chain: Ankyrin repeat domain-containing protein 34B (514 aa).

4 ANK repeats span residues 9–38 (SEGN…YINE), 42–79 (RGET…DPNI), 83–113 (SGKT…DLSL), and 117–146 (SSYS…AKGK). Residues 220 to 249 (NDDTWDPGSPVRKPALAPKGPKLPHAPPWV) form a disordered region. Serine 263 is subject to Phosphoserine. The residue at position 272 (threonine 272) is a Phosphothreonine. Serine 296 is subject to Phosphoserine.

Belongs to the ANKRD34 family. Phosphorylated.

The protein localises to the cytoplasm. It is found in the nucleus. This Homo sapiens (Human) protein is Ankyrin repeat domain-containing protein 34B (ANKRD34B).